A 289-amino-acid polypeptide reads, in one-letter code: ATP synthase gamma chain (289 aa).

The protein belongs to the ATPase gamma chain family. In terms of assembly, F-type ATPases have 2 components, CF(1) - the catalytic core - and CF(0) - the membrane proton channel. CF(1) has five subunits: alpha(3), beta(3), gamma(1), delta(1), epsilon(1). CF(0) has three main subunits: a, b and c.

The protein localises to the cell inner membrane. Functionally, produces ATP from ADP in the presence of a proton gradient across the membrane. The gamma chain is believed to be important in regulating ATPase activity and the flow of protons through the CF(0) complex. The chain is ATP synthase gamma chain from Mannheimia succiniciproducens (strain KCTC 0769BP / MBEL55E).